The following is a 123-amino-acid chain: MKTVFFLLLATYLALHPGAALQCYSCTAQMNNRDCLNVQNCSLDQHSCFTSRIRAIGLVTVISKGCSSQCEDDSENYYLGKKNITCCYSDLCNVNGAHTLKPPTTLGLLTVLCSLLLWGSSRL.

An N-terminal signal peptide occupies residues 1 to 20 (MKTVFFLLLATYLALHPGAA). In terms of domain architecture, UPAR/Ly6 spans 21 to 95 (LQCYSCTAQM…CCYSDLCNVN (75 aa)). 5 disulfide bridges follow: cysteine 23/cysteine 48, cysteine 26/cysteine 35, cysteine 41/cysteine 66, cysteine 70/cysteine 86, and cysteine 87/cysteine 92. A glycan (N-linked (GlcNAc...) asparagine) is linked at asparagine 40. Asparagine 95 carries GPI-anchor amidated asparagine lipidation. Residues 96-123 (GAHTLKPPTTLGLLTVLCSLLLWGSSRL) constitute a propeptide, removed in mature form.

As to quaternary structure, interacts with CHRNA4. In terms of tissue distribution, predominantly expressed in prostate. Also found in spleen, liver, lung, prostate, kidney and testis. Expressed in brain cortex; expression is increased in transgenic mouse model of Alzheimer disease (at protein level).

It localises to the cell membrane. May be involved in the regulation of cell proliferation. Its function is as follows. May act as a modulator of nicotinic acetylcholine receptors (nAChRs) activity. In vitro inhibits nicotine-induced signaling probably implicating alpha-3:beta-2- or alpha-7-containing nAChRs. The polypeptide is Prostate stem cell antigen (Psca) (Mus musculus (Mouse)).